Reading from the N-terminus, the 546-residue chain is Arginine--tRNA ligase (546 aa).

Residues 117–127 (ANPTGPLHIGR) carry the 'HIGH' region motif.

The protein belongs to the class-I aminoacyl-tRNA synthetase family.

It localises to the cytoplasm. The enzyme catalyses tRNA(Arg) + L-arginine + ATP = L-arginyl-tRNA(Arg) + AMP + diphosphate. This chain is Arginine--tRNA ligase, found in Thermoplasma acidophilum (strain ATCC 25905 / DSM 1728 / JCM 9062 / NBRC 15155 / AMRC-C165).